A 283-amino-acid chain; its full sequence is DNA repair protein RecO (283 aa).

The span at 254 to 264 shows a compositional bias: polar residues; sequence SSPASVGSSAT. Positions 254-283 are disordered; sequence SSPASVGSSATRYFAQGDTDENDRDPPGAR.

It belongs to the RecO family.

Functionally, involved in DNA repair and RecF pathway recombination. The sequence is that of DNA repair protein RecO from Roseiflexus sp. (strain RS-1).